The chain runs to 466 residues: Histidine--tRNA ligase (466 aa).

Belongs to the class-II aminoacyl-tRNA synthetase family. Homodimer.

It localises to the cytoplasm. The catalysed reaction is tRNA(His) + L-histidine + ATP = L-histidyl-tRNA(His) + AMP + diphosphate + H(+). This chain is Histidine--tRNA ligase, found in Bifidobacterium animalis subsp. lactis (strain AD011).